Consider the following 313-residue polypeptide: Elongation factor Ts (313 aa).

Positions 82 to 85 (TDFV) are involved in Mg(2+) ion dislocation from EF-Tu.

Belongs to the EF-Ts family.

Its subcellular location is the cytoplasm. In terms of biological role, associates with the EF-Tu.GDP complex and induces the exchange of GDP to GTP. It remains bound to the aminoacyl-tRNA.EF-Tu.GTP complex up to the GTP hydrolysis stage on the ribosome. This is Elongation factor Ts from Nostoc sp. (strain PCC 7120 / SAG 25.82 / UTEX 2576).